The following is a 225-amino-acid chain: Uridylate kinase (225 aa).

9-10 (GS) serves as a coordination point for ATP. Gly-44 lines the UMP pocket. Residues Gly-45 and Arg-49 each contribute to the ATP site. UMP is bound by residues Asp-66 and 114–120 (THPGHTT). ATP contacts are provided by Thr-140, Asn-141, Tyr-146, and Asp-149.

The protein belongs to the UMP kinase family. In terms of assembly, homohexamer.

It localises to the cytoplasm. The catalysed reaction is UMP + ATP = UDP + ADP. The protein operates within pyrimidine metabolism; CTP biosynthesis via de novo pathway; UDP from UMP (UMPK route): step 1/1. Inhibited by UTP. Catalyzes the reversible phosphorylation of UMP to UDP. The polypeptide is Uridylate kinase (Thermococcus kodakarensis (strain ATCC BAA-918 / JCM 12380 / KOD1) (Pyrococcus kodakaraensis (strain KOD1))).